The sequence spans 661 residues: Transcription factor ccg-8 (661 aa).

A compositionally biased stretch (basic residues) spans 1–11; the sequence is MEHHHHHRHMH. Disordered stretches follow at residues 1–69, 107–243, 255–279, and 354–398; these read MEHH…QADN, SASS…LDDP, LKTD…DQNQ, and RTKS…RRTS. 2 stretches are compositionally biased toward low complexity: residues 23–43 and 107–140; these read HQQY…QHQQ and SASS…SSNR. The segment covering 173 to 187 has biased composition (polar residues); sequence DHSLPSIASLNVGSS. Positions 192-203 are enriched in pro residues; sequence QPTPTPQPPPKF. Positions 357–366 are enriched in basic and acidic residues; it reads SSSDTRESGQ.

Transcription factor that plays a pivotal role in azole adaptive responses by regulating the drug accumulation in the cells. Affects the transcriptional responses to ketoconazole of many genes, including the target gene (erg11), an azole transporter gene (cdr4), a hexose transporter gene (hxt13), a stress response gene (kts-1), two transcription factor genes (named kts-2 and fsd-1/ndt80). Also regulates phospholipid synthesis that is not involved in azole resistance. This is Transcription factor ccg-8 from Neurospora crassa (strain ATCC 24698 / 74-OR23-1A / CBS 708.71 / DSM 1257 / FGSC 987).